We begin with the raw amino-acid sequence, 400 residues long: Chaperone protein DnaJ (400 aa).

In terms of domain architecture, J spans 4–69 (DYYETLGVTR…DKRRRYDQFG (66 aa)). A CR-type zinc finger spans residues 156 to 237 (GVEKTLKVKR…CYGEGIKLGE (82 aa)). Zn(2+)-binding residues include C169, C172, C185, C188, C211, C214, C225, and C228. CXXCXGXG motif repeat units lie at residues 169–176 (CEVCNGTG), 185–192 (CQTCHGSG), 211–218 (CPTCGGEG), and 225–232 (CTACYGEG).

This sequence belongs to the DnaJ family. In terms of assembly, homodimer. Requires Zn(2+) as cofactor.

The protein resides in the cytoplasm. In terms of biological role, participates actively in the response to hyperosmotic and heat shock by preventing the aggregation of stress-denatured proteins and by disaggregating proteins, also in an autonomous, DnaK-independent fashion. Unfolded proteins bind initially to DnaJ; upon interaction with the DnaJ-bound protein, DnaK hydrolyzes its bound ATP, resulting in the formation of a stable complex. GrpE releases ADP from DnaK; ATP binding to DnaK triggers the release of the substrate protein, thus completing the reaction cycle. Several rounds of ATP-dependent interactions between DnaJ, DnaK and GrpE are required for fully efficient folding. Also involved, together with DnaK and GrpE, in the DNA replication of plasmids through activation of initiation proteins. This is Chaperone protein DnaJ from Chlorobium chlorochromatii (strain CaD3).